Reading from the N-terminus, the 390-residue chain is Putative cyclin-F2-1 (390 aa).

The tract at residues 135–154 is disordered; the sequence is YNGDDDAPAPDDSMASRPQL.

It belongs to the cyclin family. Cyclin F subfamily.

The chain is Putative cyclin-F2-1 (CycF2-1) from Oryza sativa subsp. japonica (Rice).